Reading from the N-terminus, the 245-residue chain is MEAVWESARILANSRFAVAFTGAGISAESGIPTFRGKDGLWSRFDPRDLATPEAFNRDPRLVWEWYSWRIERVLAAKPNKAHRLLARLEDSGVLKAVITQNVDGLHRRAGSRRVLELHGNVLRARCTRCGSKLEWREKPSNLPPSCPRCGGVLRPDVVWFGEPLDTSLLEEAFGLARRSDVMIIIGTSGAVDPAGLLPLAAKESGATLINVNPEPNRYSGVADIELRMRAVEFAERLSRAMGIDI.

One can recognise a Deacetylase sirtuin-type domain in the interval 1–245 (MEAVWESARI…RLSRAMGIDI (245 aa)). 22–41 (GAGISAESGIPTFRGKDGLW) is an NAD(+) binding site. Substrate contacts are provided by Y66 and R69. An NAD(+)-binding site is contributed by 100 to 103 (QNVD). H118 functions as the Proton acceptor in the catalytic mechanism. Zn(2+) contacts are provided by C126, C129, C146, and C149. NAD(+) is bound by residues 186-188 (GTS), 212-214 (NPE), and M241.

It belongs to the sirtuin family. Class III subfamily. The cofactor is Zn(2+).

The protein resides in the cytoplasm. The catalysed reaction is N(6)-acetyl-L-lysyl-[protein] + NAD(+) + H2O = 2''-O-acetyl-ADP-D-ribose + nicotinamide + L-lysyl-[protein]. It carries out the reaction N(6)-succinyl-L-lysyl-[protein] + NAD(+) + H2O = 2''-O-succinyl-ADP-D-ribose + nicotinamide + L-lysyl-[protein]. Functionally, NAD-dependent lysine deacetylase and desuccinylase that specifically removes acetyl and succinyl groups on target proteins. Modulates the activities of several proteins which are inactive in their acylated form. Deacetylates the N-terminal lysine residue of Alba, the major archaeal chromatin protein and that, in turn, increases Alba's DNA binding affinity, thereby repressing transcription. This is NAD-dependent protein deacylase from Aeropyrum pernix (strain ATCC 700893 / DSM 11879 / JCM 9820 / NBRC 100138 / K1).